The primary structure comprises 184 residues: TRAF-interacting protein with FHA domain-containing protein A (184 aa).

The residue at position 9 (Thr-9) is a Phosphothreonine. Positions 47 to 103 (VKFGRNSNMCQYTFQDKQVSRIQFVLQPFKQFNSSVLSFEIKNMSKKTSLMVDNQEL) constitute an FHA domain. The segment at 152 to 184 (NNWPTQNPIPEDGMYSSYFTHRSSPSEMDENEL) is disordered. The span at 168–177 (SYFTHRSSPS) shows a compositional bias: polar residues.

Belongs to the TIFA family. As to quaternary structure, homooligomer; homooligomerizes following phosphorylation at Thr-9. Interacts with IRAK1, TRAF2 and TRAF6. Interacts with TIFAB; binding to TIFAB inhibits TRAF6 activation, possibly by inducing a conformational change in TIFA. Interacts with ZCCHC11; binding to ZCCHC11 suppresses the TRAF6-dependent activation of NF-kappa-B. Post-translationally, phosphorylated at Thr-9 following detection of ADP-D-glycero-beta-D-manno-heptose (ADP-Heptose) by ALPK1. Phosphorylation at Thr-9 by ALPK1 leads to the formation of an intermolecular binding between the FHA domain and phosphorylated Thr-9, promoting TIFA oligomerization and TIFA-mediated NF-kappa-B activation. In terms of tissue distribution, highly expressed in the spleen and at lower levels in heart, brain, lung, liver, kidney and testes.

It localises to the cytoplasm. Adapter molecule that plays a key role in the activation of pro-inflammatory NF-kappa-B signaling following detection of bacterial pathogen-associated molecular pattern metabolites (PAMPs). Promotes activation of an innate immune response by inducing the oligomerization and polyubiquitination of TRAF6, which leads to the activation of TAK1 and IKK through a proteasome-independent mechanism. TIFA-dependent innate immune response is triggered by ADP-D-glycero-beta-D-manno-heptose (ADP-Heptose), a potent PAMP present in all Gram-negative and some Gram-positive bacteria: ADP-Heptose is recognized by ALPK1, which phosphorylates TIFA at Thr-9, leading to TIFA homooligomerization and subsequent activation of pro-inflammatory NF-kappa-B signaling. This chain is TRAF-interacting protein with FHA domain-containing protein A, found in Mus musculus (Mouse).